The following is a 429-amino-acid chain: Enolase (429 aa).

Position 162 (Q162) interacts with (2R)-2-phosphoglycerate. Residue E204 is the Proton donor of the active site. Positions 241, 283, and 310 each coordinate Mg(2+). Residues K335, R364, S365, and K386 each coordinate (2R)-2-phosphoglycerate. Residue K335 is the Proton acceptor of the active site.

Belongs to the enolase family. The cofactor is Mg(2+).

The protein resides in the cytoplasm. It is found in the secreted. It localises to the cell surface. The catalysed reaction is (2R)-2-phosphoglycerate = phosphoenolpyruvate + H2O. It participates in carbohydrate degradation; glycolysis; pyruvate from D-glyceraldehyde 3-phosphate: step 4/5. In terms of biological role, catalyzes the reversible conversion of 2-phosphoglycerate (2-PG) into phosphoenolpyruvate (PEP). It is essential for the degradation of carbohydrates via glycolysis. This is Enolase from Mycobacterium tuberculosis (strain ATCC 25177 / H37Ra).